The chain runs to 403 residues: Tryptophan synthase beta chain 1 (403 aa).

At Lys-96 the chain carries N6-(pyridoxal phosphate)lysine.

Belongs to the TrpB family. As to quaternary structure, tetramer of two alpha and two beta chains. The cofactor is pyridoxal 5'-phosphate.

The catalysed reaction is (1S,2R)-1-C-(indol-3-yl)glycerol 3-phosphate + L-serine = D-glyceraldehyde 3-phosphate + L-tryptophan + H2O. It participates in amino-acid biosynthesis; L-tryptophan biosynthesis; L-tryptophan from chorismate: step 5/5. The beta subunit is responsible for the synthesis of L-tryptophan from indole and L-serine. The sequence is that of Tryptophan synthase beta chain 1 (trpB1) from Wolinella succinogenes (strain ATCC 29543 / DSM 1740 / CCUG 13145 / JCM 31913 / LMG 7466 / NCTC 11488 / FDC 602W) (Vibrio succinogenes).